Consider the following 386-residue polypeptide: Short integuments 2, mitochondrial (386 aa).

One can recognise a CP-type G domain in the interval 37–207 (TRAIRNRLKL…VLDSPGVLVP (171 aa)). The DARXP motif motif lies at 55–59 (DARIP). The tract at residues 81 to 84 (NKKD) is G4. GTP-binding positions include 81-84 (NKKD), 109-110 (NA), and 146-151 (NVGKSA). The interval 109-111 (NAH) is G5. Residues 143-150 (GVPNVGKS) form a G1 region. The segment at 180–184 (GVTQD) is G2. A G3 region spans residues 200 to 203 (DSPG). A GTP-binding site is contributed by glycine 203.

The protein belongs to the TRAFAC class YlqF/YawG GTPase family. MTG1 subfamily. In terms of tissue distribution, expressed in seedlings, roots, leaves, stems, inflorescences and siliques.

It is found in the mitochondrion. Functionally, GTPase that may function in mitochondrial ribosome assembly. Involved in a variety of growth processes during vegetative development and promotes growth and cell division in the developing integuments. The protein is Short integuments 2, mitochondrial of Arabidopsis thaliana (Mouse-ear cress).